Consider the following 441-residue polypeptide: MSAVDDQQNADKQVEQWKIKKLIKNLEAARGNGTSMISLIIRPGDQIAKVNKMLAEEYGTASNIKSRVNRLSVLGAITSAQQRLKLYTKVPDNGLVIYCGTMVTDEGKEKPVRIDIEPFKPINTSLYLCDNKFHTAPLGELLESDEKFGFIVVDGNGALFGLLCGSTRTVLHKITVDLPKKHGRGGQSALRFARLRMEKRHNYVRKVSELATQFYVTNDKPNVSGLILAGSADFKTELGTSDMFDQRLREKIIKIVDVSYGGDNGFNQAIELSGEVLSSVKFIQEKKLISQFFEEIAQDTGKYCFGIADTLKALDLGAAHTLIVWESLETIRYLLRLPTGEEKVIFLNKDQNKDASVFKDKESGLDYEIVEEMPIVEWFANNYKNFGASLEFVTNKSQEGSQFCKGFGGLGGLLRYQVDFAQLNDFDNPDENEYDDSDSDF.

The protein belongs to the eukaryotic release factor 1 family. Heterodimer of two subunits, one of which binds GTP.

It is found in the cytoplasm. In terms of biological role, directs the termination of nascent peptide synthesis (translation) in response to the termination codons UAA, UAG and UGA. The chain is Eukaryotic peptide chain release factor subunit 1 (erf1) from Dictyostelium discoideum (Social amoeba).